We begin with the raw amino-acid sequence, 478 residues long: UDP-glycosyltransferase 71B5 (478 aa).

UDP-alpha-D-glucose contacts are provided by residues Ser280, 347–349, 364–372, and 386–389; these read APQ, HCGWNSILE, and YAEQ.

Belongs to the UDP-glycosyltransferase family.

Functionally, possesses low quercetin 3-O-glucosyltransferase activity in vitro. This chain is UDP-glycosyltransferase 71B5 (UGT71B5), found in Arabidopsis thaliana (Mouse-ear cress).